A 335-amino-acid chain; its full sequence is Phosphate acyltransferase (335 aa).

The protein belongs to the PlsX family. As to quaternary structure, homodimer. Probably interacts with PlsY.

The protein localises to the cytoplasm. It catalyses the reaction a fatty acyl-[ACP] + phosphate = an acyl phosphate + holo-[ACP]. It participates in lipid metabolism; phospholipid metabolism. Catalyzes the reversible formation of acyl-phosphate (acyl-PO(4)) from acyl-[acyl-carrier-protein] (acyl-ACP). This enzyme utilizes acyl-ACP as fatty acyl donor, but not acyl-CoA. The protein is Phosphate acyltransferase of Streptococcus pyogenes serotype M28 (strain MGAS6180).